The chain runs to 107 residues: Nucleoid-associated protein RP866 (107 aa).

Belongs to the YbaB/EbfC family. Homodimer.

The protein resides in the cytoplasm. It localises to the nucleoid. In terms of biological role, binds to DNA and alters its conformation. May be involved in regulation of gene expression, nucleoid organization and DNA protection. The protein is Nucleoid-associated protein RP866 of Rickettsia prowazekii (strain Madrid E).